The chain runs to 541 residues: Glucose-6-phosphate isomerase (541 aa).

E354 serves as the catalytic Proton donor. Residues H385 and K505 contribute to the active site.

This sequence belongs to the GPI family.

The protein resides in the cytoplasm. It catalyses the reaction alpha-D-glucose 6-phosphate = beta-D-fructose 6-phosphate. The protein operates within carbohydrate biosynthesis; gluconeogenesis. It participates in carbohydrate degradation; glycolysis; D-glyceraldehyde 3-phosphate and glycerone phosphate from D-glucose: step 2/4. Functionally, catalyzes the reversible isomerization of glucose-6-phosphate to fructose-6-phosphate. This Cupriavidus metallidurans (strain ATCC 43123 / DSM 2839 / NBRC 102507 / CH34) (Ralstonia metallidurans) protein is Glucose-6-phosphate isomerase.